Here is a 540-residue protein sequence, read N- to C-terminus: Zinc metalloproteinase nas-10 (540 aa).

The region spanning 293–500 (ASIFFEQNLI…VEILNKMYCK (208 aa)) is the Peptidase M12A domain. 5 disulfide bridges follow: cysteine 339–cysteine 499, cysteine 365–cysteine 385, cysteine 504–cysteine 540, cysteine 511–cysteine 533, and cysteine 520–cysteine 537. Residue histidine 394 participates in Zn(2+) binding. The active site involves glutamate 395. Zn(2+) is bound by residues histidine 398 and histidine 404. The ShKT domain maps to 504–540 (CDDKNVYCGAWALQDLCNNPNHNVWMRSNCRKSCNFC).

Zn(2+) is required as a cofactor.

In terms of biological role, metalloprotease. This chain is Zinc metalloproteinase nas-10, found in Caenorhabditis elegans.